Consider the following 350-residue polypeptide: MRPIKLMGHERSLTQVKYNREGDLLFSVAKDNAASIWYSSNGERLGTLEGHQGVIWSIDVDPETHLCATGGGDLAIKLWKVENGQCVYTWDSPSPVRRVAFSPDGKKLLAIADQVMGHIGTVSVFDINDDDATLSQQKAEPSLVIETKSEGSKATVAGWSGDGDYIIVGHDNGYVSKYDSKTGKLVTSLQAHGIHNEEKNVSITDIQFAPEDRSYFITSSKDKTATLIDVDTFEILKVYKADAPMNTAAITPVKDFVILGGGQEARNVTTTAESQGKFEARFYHKIFEEEIGRVKGHFGPLNTVAVHPDGTGYSSGGEDGFIRVHTFDKSYQDFLFDAERTERAAAAGTI.

6 WD repeats span residues 8–49, 51–89, 91–135, 149–188, 198–240, and 296–335; these read GHER…GTLE, HQGV…CVYT, DSPS…ATLS, SEGS…LVTS, EKNV…KVYK, and GHFG…QDFL.

Belongs to the eIF-3 subunit I family. Component of the eukaryotic translation initiation factor 3 (eIF-3) complex.

Its subcellular location is the cytoplasm. In terms of biological role, component of the eukaryotic translation initiation factor 3 (eIF-3) complex, which is involved in protein synthesis of a specialized repertoire of mRNAs and, together with other initiation factors, stimulates binding of mRNA and methionyl-tRNAi to the 40S ribosome. The eIF-3 complex specifically targets and initiates translation of a subset of mRNAs involved in cell proliferation. The chain is Eukaryotic translation initiation factor 3 subunit I from Candida albicans (strain SC5314 / ATCC MYA-2876) (Yeast).